Here is a 421-residue protein sequence, read N- to C-terminus: Forkhead box protein fkh-4 (421 aa).

The fork-head DNA-binding region spans 118-218 (RPPISYVALC…SDADFDFFRK (101 aa)).

Its subcellular location is the nucleus. Its function is as follows. Transcription factor. Regulates expression of a class of small RNAs, known as 21U-RNAs, perhaps acting redundantly with fkh-3 and fkh-5. The protein is Forkhead box protein fkh-4 of Caenorhabditis elegans.